Reading from the N-terminus, the 150-residue chain is MKSINAYTDGSCLGNPGPGGWAVLLRYKNNEKELVGGELDTTNNRMELMAAIMALERLSEPCQIKLHTDSQYVRQGITEWMSGWVRRGWKTAAGDPVKNRDLWERLCAATQRHMVEWCWVKAHNGDSDNERVDVLARGQAMAQRSTVASR.

The 141-residue stretch at 1-141 folds into the RNase H type-1 domain; that stretch reads MKSINAYTDG…VDVLARGQAM (141 aa). Residues Asp-9, Glu-47, Asp-69, and Asp-133 each coordinate Mg(2+).

This sequence belongs to the RNase H family. As to quaternary structure, monomer. The cofactor is Mg(2+).

It localises to the cytoplasm. It catalyses the reaction Endonucleolytic cleavage to 5'-phosphomonoester.. Its function is as follows. Endonuclease that specifically degrades the RNA of RNA-DNA hybrids. In Xylella fastidiosa (strain 9a5c), this protein is Ribonuclease HI.